Consider the following 178-residue polypeptide: uncharacterized protein (178 aa).

This sequence belongs to the IIV-6 136R family.

This is an uncharacterized protein from Invertebrate iridescent virus 6 (IIV-6).